We begin with the raw amino-acid sequence, 1377 residues long: DNA-directed RNA polymerase subunit beta (1377 aa).

Belongs to the RNA polymerase beta chain family. The RNAP catalytic core consists of 2 alpha, 1 beta, 1 beta' and 1 omega subunit. When a sigma factor is associated with the core the holoenzyme is formed, which can initiate transcription.

The enzyme catalyses RNA(n) + a ribonucleoside 5'-triphosphate = RNA(n+1) + diphosphate. Its function is as follows. DNA-dependent RNA polymerase catalyzes the transcription of DNA into RNA using the four ribonucleoside triphosphates as substrates. The sequence is that of DNA-directed RNA polymerase subunit beta from Brucella suis biovar 1 (strain 1330).